Consider the following 490-residue polypeptide: Betaine aldehyde dehydrogenase (490 aa).

Position 93 (D93) interacts with K(+). An NAD(+)-binding site is contributed by G150–W152. K162 (charge relay system) is an active-site residue. Position 176–179 (K176–E179) interacts with NAD(+). V180 contributes to the K(+) binding site. G230–S233 provides a ligand contact to NAD(+). L246 serves as a coordination point for K(+). Residue E252 is the Proton acceptor of the active site. 3 residues coordinate NAD(+): G254, C286, and E387. C286 serves as the catalytic Nucleophile. C286 is modified (cysteine sulfenic acid (-SOH)). K(+) is bound by residues K457 and G460. Residue E464 is the Charge relay system of the active site.

Belongs to the aldehyde dehydrogenase family. As to quaternary structure, dimer of dimers. It depends on K(+) as a cofactor.

It catalyses the reaction betaine aldehyde + NAD(+) + H2O = glycine betaine + NADH + 2 H(+). It participates in amine and polyamine biosynthesis; betaine biosynthesis via choline pathway; betaine from betaine aldehyde: step 1/1. Functionally, involved in the biosynthesis of the osmoprotectant glycine betaine. Catalyzes the irreversible oxidation of betaine aldehyde to the corresponding acid. This chain is Betaine aldehyde dehydrogenase, found in Pectobacterium carotovorum subsp. carotovorum (strain PC1).